The following is a 495-amino-acid chain: Trigger factor (495 aa).

One can recognise a PPIase FKBP-type domain in the interval 169–254; it reads GDRVTIDYLG…VKEVAAPGEV (86 aa). The segment at 439-495 is disordered; that stretch reads ALLADDESEDKPAAKKAAPKKKAAKAEATEAAAEGEEAAVPKKKAAPKKKAAEDSAE.

The protein belongs to the FKBP-type PPIase family. Tig subfamily.

It is found in the cytoplasm. It catalyses the reaction [protein]-peptidylproline (omega=180) = [protein]-peptidylproline (omega=0). In terms of biological role, involved in protein export. Acts as a chaperone by maintaining the newly synthesized protein in an open conformation. Functions as a peptidyl-prolyl cis-trans isomerase. The chain is Trigger factor from Rhizobium rhizogenes (strain K84 / ATCC BAA-868) (Agrobacterium radiobacter).